We begin with the raw amino-acid sequence, 784 residues long: MEVSLTAGAIGKIMNGEVTTEADMIPVLQVTDLKQIMAQQDPTRERFRMVLSDGTYLHQGMLGTDLNNLVKEGTLQPGSIVRLTRFVGDVIKGRRIVIVPQLEVLKQISDIIGHPVPGGKHNDQRGADSGIKFNTTEQQGSGIRQVNNIEPGRSNAAISPQVGGTGSSVPASTTPSTRAYSNPSSGNGVTRQDYARDPPTSYPHQPQPPPPMYANRGPVARNEAPPKIIPVNALSPYSGRWTIKARVTNKAALKQYSNPRGEGKVFNFDLLDADGGEIRVTCFNAVADQFYDQIVVGNLYLISRGSLRPAQKNFNHLRNDYEIMLDNASTIKQCYEEDAAIPRHQFHFRTIGDIESMENNCIVDVIGIVSSISPTVTITRKNGTATPKRSLQLKDMSGRSVEVTMWGDFCNAEGQRLQSLCDSGVFPVLAVKAGRISEFNGKTVSTIGSSQLFIDPDFVEAEKLKNWFEREGKSVPCISLSREFSGSGKVDVRKTISQIKDEKLGTSEKPDWITVSATILYLKFDNFCYTACPIMNGDRPCSKKVTDNGDGTWRCEKCDKSVDECDYRYILQLQIQDHTDLTCVTAFQEAGEEIMGISAKDLYYVKNEHKDEEKFEDIIRKVAFTKYNFKLKVKEETFSDEQRVKATVVKVDKLNYSADTRTMLGAMDKLRTRDANSLPINPEGSDYNADVVNTGIGSSGTRDPSSVQRRDFGLHAHQSGQSGNHYSGGGATTSCNVCGNSGHVSAKCPGATKPQEQGQYMGGSYRGTTGSYGGGLPRQHVGSY.

Residues 114–224 are disordered; it reads HPVPGGKHND…NRGPVARNEA (111 aa). Composition is skewed to polar residues over residues 132–148 and 167–190; these read KFNTTEQQGSGIRQVNN and SSVPASTTPSTRAYSNPSSGNGVT. The segment at residues 241–327 is a DNA-binding region (OB); it reads WTIKARVTNK…RNDYEIMLDN (87 aa). The C4-type zinc finger occupies 532–558; it reads CPIMNGDRPCSKKVTDNGDGTWRCEKC. Disordered regions lie at residues 678–707 and 746–784; these read LPINPEGSDYNADVVNTGIGSSGTRDPSSV and AKCPGATKPQEQGQYMGGSYRGTTGSYGGGLPRQHVGSY. The segment covering 695–707 has biased composition (polar residues); sequence GIGSSGTRDPSSV. The segment covering 760–776 has biased composition (gly residues); it reads YMGGSYRGTTGSYGGGL.

This sequence belongs to the replication factor A protein 1 family. In terms of assembly, heterotrimer of RPA1, RPA2 and RPA3 (canonical replication protein A complex).

The protein localises to the nucleus. Its function is as follows. Component of the replication protein A complex (RPA) required for DNA recombination, repair and replication. The activity of RPA is mediated by single-stranded DNA binding and protein interactions. Probably involved in repair of double-strand DNA breaks (DSBs) induced by genotoxic stresses. This is Replication protein A 70 kDa DNA-binding subunit E (RPA1E) from Arabidopsis thaliana (Mouse-ear cress).